The following is a 352-amino-acid chain: Histidine biosynthesis bifunctional protein HisB (352 aa).

A histidinol-phosphatase region spans residues 1-164; the sequence is MSQKILFIDR…EIENEILSSF (164 aa). Residue Asp-9 is the Nucleophile of the active site. Mg(2+)-binding residues include Asp-9 and Asp-11. Asp-11 acts as the Proton donor in catalysis. Residues Cys-93, His-95, Cys-101, and Cys-103 each contribute to the Zn(2+) site. Asp-130 serves as a coordination point for Mg(2+). An imidazoleglycerol-phosphate dehydratase region spans residues 165 to 352; that stretch reads RSASYQRTTK…ENLASSKGVI (188 aa).

It in the N-terminal section; belongs to the histidinol-phosphatase family. In the C-terminal section; belongs to the imidazoleglycerol-phosphate dehydratase family. Requires Mg(2+) as cofactor. Zn(2+) is required as a cofactor.

The protein resides in the cytoplasm. It carries out the reaction D-erythro-1-(imidazol-4-yl)glycerol 3-phosphate = 3-(imidazol-4-yl)-2-oxopropyl phosphate + H2O. The enzyme catalyses L-histidinol phosphate + H2O = L-histidinol + phosphate. It functions in the pathway amino-acid biosynthesis; L-histidine biosynthesis; L-histidine from 5-phospho-alpha-D-ribose 1-diphosphate: step 6/9. Its pathway is amino-acid biosynthesis; L-histidine biosynthesis; L-histidine from 5-phospho-alpha-D-ribose 1-diphosphate: step 8/9. The sequence is that of Histidine biosynthesis bifunctional protein HisB from Campylobacter jejuni subsp. jejuni serotype O:2 (strain ATCC 700819 / NCTC 11168).